A 553-amino-acid polypeptide reads, in one-letter code: Keratin, type II cytoskeletal 6A (553 aa).

Over residues 1–20 (MSTKTTIKSQTSHRGYSASS) the composition is skewed to polar residues. The tract at residues 1–21 (MSTKTTIKSQTSHRGYSASSA) is disordered. The tract at residues 1 to 151 (MSTKTTIKSQ…DPTIQRVRTE (151 aa)) is head. The segment at 152–187 (EREQIKTLNNKFASFIDKVRFLEQQNKVLDTKWALL) is coil 1A. One can recognise an IF rod domain in the interval 152–465 (EREQIKTLNN…KLLEGEECRL (314 aa)). A linker 1 region spans residues 188-206 (QEQGTKTVRQNLEPMFEQY). Residues 207 to 298 (ISNLRRQLDS…ALYEAELSQM (92 aa)) form a coil 1B region. The linker 12 stretch occupies residues 299 to 322 (QTHISDTSVVLSMDNNRSLDLDSI). Residues 323–461 (IAEVKAQYED…ATYRKLLEGE (139 aa)) are coil 2. The tract at residues 462-553 (ECRLNGEGVG…TSSSKKSYRQ (92 aa)) is tail. Positions 528–553 (LSSSGGLSSSTIKYTTTSSSKKSYRQ) are disordered. A compositionally biased stretch (low complexity) spans 531-553 (SGGLSSSTIKYTTTSSSKKSYRQ).

It belongs to the intermediate filament family. In terms of assembly, heterodimer of a type I and a type II keratin. KRT6 isomers associate with KRT16 and/or KRT17. Interacts with TCHP. As to expression, predominates in the adult trunk skin, tongue, trachea/esophagus and eye. In adult skin, localization is restricted to hair follicles, where it is localized predominantly in the outer root sheath.

In terms of biological role, epidermis-specific type I keratin involved in wound healing. Involved in the activation of follicular keratinocytes after wounding, while it does not play a major role in keratinocyte proliferation or migration. Participates in the regulation of epithelial migration by inhibiting the activity of SRC during wound repair. This is Keratin, type II cytoskeletal 6A (Krt6a) from Mus musculus (Mouse).